The primary structure comprises 336 residues: DNA-directed RNA polymerase subunit alpha (336 aa).

Positions 1–226 (MLIAQRPTLS…ELFGLARELN (226 aa)) are alpha N-terminal domain (alpha-NTD). Residues 241-336 (AALAADMALP…DDAAFSDDEL (96 aa)) are alpha C-terminal domain (alpha-CTD).

It belongs to the RNA polymerase alpha chain family. As to quaternary structure, homodimer. The RNAP catalytic core consists of 2 alpha, 1 beta, 1 beta' and 1 omega subunit. When a sigma factor is associated with the core the holoenzyme is formed, which can initiate transcription.

The enzyme catalyses RNA(n) + a ribonucleoside 5'-triphosphate = RNA(n+1) + diphosphate. In terms of biological role, DNA-dependent RNA polymerase catalyzes the transcription of DNA into RNA using the four ribonucleoside triphosphates as substrates. This is DNA-directed RNA polymerase subunit alpha from Paenarthrobacter aurescens (strain TC1).